Here is a 196-residue protein sequence, read N- to C-terminus: dTDP-4-dehydro-6-deoxyglucose 3-epimerase (196 aa).

Residues Arg-21, Glu-26, 45 to 47 (QVN), and Arg-57 each bind substrate. His-60 acts as the Proton acceptor in catalysis. Lys-70 and Arg-117 together coordinate substrate. Residue Tyr-130 is the Proton donor of the active site. Substrate-binding residues include Glu-141 and Arg-166.

This sequence belongs to the dTDP-4-dehydrorhamnose 3,5-epimerase family. As to quaternary structure, homodimer.

The enzyme catalyses dTDP-4-dehydro-6-deoxy-alpha-D-glucose = dTDP-4-dehydro-6-deoxy-alpha-D-allose. It functions in the pathway antibiotic biosynthesis. Involved in the biosynthesis of dTDP-6-deoxy-D-allose, an intermediate in the biosynthesis of mycinose, which is one of the two unusual sugars attached to the 16-membered macrolactone ring of the aglycone antibiotic chalcomycin. Catalyzes the conversion of dTDP-4-oxo-6-deoxyglucose to dTDP-4-oxo-6-deoxyallose, via a C-3 epimerization. The protein is dTDP-4-dehydro-6-deoxyglucose 3-epimerase of Streptomyces bikiniensis.